Consider the following 279-residue polypeptide: MTATLMDGRTLSRQLLESTAERVTGFHRSHGRRPCLATVLVGEDPASHTYVRIKVNRCTEVGIDSRRFDLPTLTTTEQLVRVLRDLSSDSAVDGILLQHPTPPQIDEHAAFEAIDPSKDVDGVTGTSFAAMAFGYRGFASCTPAAIMRLLDAYDVPLSGQRAVVVGRSAILGKPIGMLLLARDATVTYCHSRTTDLAAHVAEADLVVAAVGVPHLVRGEWIKPGAVVVDAGYNAGNVGDVQAATAANRASLITPVPGGVGPMTIAVLLAQTVDAAERHG.

Residues 166-168 (GRS) and serine 191 contribute to the NADP(+) site.

This sequence belongs to the tetrahydrofolate dehydrogenase/cyclohydrolase family. As to quaternary structure, homodimer.

The enzyme catalyses (6R)-5,10-methylene-5,6,7,8-tetrahydrofolate + NADP(+) = (6R)-5,10-methenyltetrahydrofolate + NADPH. The catalysed reaction is (6R)-5,10-methenyltetrahydrofolate + H2O = (6R)-10-formyltetrahydrofolate + H(+). The protein operates within one-carbon metabolism; tetrahydrofolate interconversion. Its function is as follows. Catalyzes the oxidation of 5,10-methylenetetrahydrofolate to 5,10-methenyltetrahydrofolate and then the hydrolysis of 5,10-methenyltetrahydrofolate to 10-formyltetrahydrofolate. The polypeptide is Bifunctional protein FolD 1 (Salinispora arenicola (strain CNS-205)).